Here is a 106-residue protein sequence, read N- to C-terminus: Large ribosomal subunit protein eL42 (106 aa).

Residues 1–29 (MVNIPKTRRTYCKGKACRKHTPHKVTQYK) show a composition bias toward basic residues. Residues 1 to 56 (MVNIPKTRRTYCKGKACRKHTPHKVTQYKKGKDSLSAQGKRRYDRKQSGYGGQTKP) are disordered.

It belongs to the eukaryotic ribosomal protein eL42 family.

The protein is Large ribosomal subunit protein eL42 (RPL44) of Cryptococcus neoformans var. neoformans serotype D (strain B-3501A) (Filobasidiella neoformans).